Consider the following 37-residue polypeptide: Large ribosomal subunit protein bL36c (37 aa).

Belongs to the bacterial ribosomal protein bL36 family.

Its subcellular location is the plastid. The protein localises to the chloroplast. This chain is Large ribosomal subunit protein bL36c, found in Phaseolus angularis (Azuki bean).